Reading from the N-terminus, the 236-residue chain is Phosphoglycolate phosphatase (236 aa).

Asp-23 acts as the Nucleophile in catalysis. 2 residues coordinate Mg(2+): Asp-23 and Asp-25. Lys-162 is a binding site for substrate. Residues Asp-185 and Asp-189 each contribute to the Mg(2+) site.

Belongs to the archaeal SPP-like hydrolase family. The cofactor is Mg(2+).

It catalyses the reaction 2-phosphoglycolate + H2O = glycolate + phosphate. Functionally, catalyzes the dephosphorylation of 2-phosphoglycolate. The sequence is that of Phosphoglycolate phosphatase from Picrophilus torridus (strain ATCC 700027 / DSM 9790 / JCM 10055 / NBRC 100828 / KAW 2/3).